The chain runs to 315 residues: MRVILAPMEGVVDDLMRDILSSINPYDLLVTEFVRVVDQLLPEKVFLKLCPELLSGGYTPSGTPVRVQLLGQEPNCMAENAMRAIELGSHGVDANFGCPAKMVNRSNGGAVLLQYPNTIHDIVRAMRQAVPAEHPVTAKIRLGYEDKSLFMENALAVYEAGATELAIHARSKVDGYKPPAYWEYITEVRERLPIPVIANGEIWNRDDAKRCMQVTGCDSIMIGRGAISLPNLADTIKTGATPYSWADTLQLMLSYTQRELSGRKSDYYPARIKQWFSYLNRQYPEADTLFRELRIYKTTEEIVRVLEQAQHHLNQ.

FMN contacts are provided by residues 7–9 (PME) and Gln68. Cys98 functions as the Proton donor in the catalytic mechanism. FMN-binding positions include Lys139, 199-201 (NGE), and 223-224 (GR).

It belongs to the Dus family. DusC subfamily. It depends on FMN as a cofactor.

It carries out the reaction 5,6-dihydrouridine(16) in tRNA + NADP(+) = uridine(16) in tRNA + NADPH + H(+). The enzyme catalyses 5,6-dihydrouridine(16) in tRNA + NAD(+) = uridine(16) in tRNA + NADH + H(+). Functionally, catalyzes the synthesis of 5,6-dihydrouridine (D), a modified base found in the D-loop of most tRNAs, via the reduction of the C5-C6 double bond in target uridines. Specifically modifies U16 in tRNAs. In Shewanella oneidensis (strain ATCC 700550 / JCM 31522 / CIP 106686 / LMG 19005 / NCIMB 14063 / MR-1), this protein is tRNA-dihydrouridine(16) synthase.